Reading from the N-terminus, the 367-residue chain is tRNA-specific 2-thiouridylase MnmA (367 aa).

ATP is bound by residues 11 to 18 (AMSGGVDS) and Met-37. An interaction with target base in tRNA region spans residues 97–99 (NPD). The Nucleophile role is filled by Cys-102. A disulfide bridge connects residues Cys-102 and Cys-199. Gly-127 is a binding site for ATP. Positions 149-151 (KDQ) are interaction with tRNA. The Cysteine persulfide intermediate role is filled by Cys-199. Positions 311-312 (RY) are interaction with tRNA.

The protein belongs to the MnmA/TRMU family. In terms of assembly, interacts with TusE.

The protein localises to the cytoplasm. The catalysed reaction is S-sulfanyl-L-cysteinyl-[protein] + uridine(34) in tRNA + AH2 + ATP = 2-thiouridine(34) in tRNA + L-cysteinyl-[protein] + A + AMP + diphosphate + H(+). Catalyzes the 2-thiolation of uridine at the wobble position (U34) of tRNA(Lys), tRNA(Glu) and tRNA(Gln), leading to the formation of s(2)U34, the first step of tRNA-mnm(5)s(2)U34 synthesis. Sulfur is provided by IscS, via a sulfur-relay system. Binds ATP and its substrate tRNAs. The polypeptide is tRNA-specific 2-thiouridylase MnmA (Buchnera aphidicola subsp. Schizaphis graminum (strain Sg)).